The following is a 255-amino-acid chain: Imidazole glycerol phosphate synthase subunit HisF (255 aa).

Residues aspartate 12 and aspartate 131 contribute to the active site.

This sequence belongs to the HisA/HisF family. Heterodimer of HisH and HisF.

Its subcellular location is the cytoplasm. The catalysed reaction is 5-[(5-phospho-1-deoxy-D-ribulos-1-ylimino)methylamino]-1-(5-phospho-beta-D-ribosyl)imidazole-4-carboxamide + L-glutamine = D-erythro-1-(imidazol-4-yl)glycerol 3-phosphate + 5-amino-1-(5-phospho-beta-D-ribosyl)imidazole-4-carboxamide + L-glutamate + H(+). Its pathway is amino-acid biosynthesis; L-histidine biosynthesis; L-histidine from 5-phospho-alpha-D-ribose 1-diphosphate: step 5/9. IGPS catalyzes the conversion of PRFAR and glutamine to IGP, AICAR and glutamate. The HisF subunit catalyzes the cyclization activity that produces IGP and AICAR from PRFAR using the ammonia provided by the HisH subunit. This Neisseria gonorrhoeae (strain ATCC 700825 / FA 1090) protein is Imidazole glycerol phosphate synthase subunit HisF.